We begin with the raw amino-acid sequence, 170 residues long: Adenine phosphoribosyltransferase (170 aa).

Belongs to the purine/pyrimidine phosphoribosyltransferase family. As to quaternary structure, homodimer.

It is found in the cytoplasm. It carries out the reaction AMP + diphosphate = 5-phospho-alpha-D-ribose 1-diphosphate + adenine. It functions in the pathway purine metabolism; AMP biosynthesis via salvage pathway; AMP from adenine: step 1/1. Its function is as follows. Catalyzes a salvage reaction resulting in the formation of AMP, that is energically less costly than de novo synthesis. This is Adenine phosphoribosyltransferase from Clostridioides difficile (strain 630) (Peptoclostridium difficile).